The chain runs to 406 residues: N-acetylmuramoyl-L-alanine amidase CwlM (406 aa).

Peptidoglycan-binding domain regions lie at residues 18 to 83 and 105 to 160; these read SAAV…YRAL and GDDV…LRSL. Residues 193 to 370 enclose the MurNAc-LAA domain; that stretch reads IIIDPGRGGV…IAEGILAAVK (178 aa).

It belongs to the N-acetylmuramoyl-L-alanine amidase 3 family.

The protein localises to the periplasm. The catalysed reaction is Hydrolyzes the link between N-acetylmuramoyl residues and L-amino acid residues in certain cell-wall glycopeptides.. Its pathway is cell wall degradation; peptidoglycan degradation. Cell-wall hydrolase that hydrolyzes the amide bond between N-acetylmuramic acid and L-alanine in cell-wall glycopeptides. Is able to lyse whole mycobacteria, release peptidoglycan from the cell wall of M.luteus and M.smegmatis, and cleave N-acetylmuramoyl-L-alanyl-D-isoglutamine, releasing free N-acetylmuramic acid and dipeptide. The chain is N-acetylmuramoyl-L-alanine amidase CwlM from Mycobacterium tuberculosis (strain ATCC 25618 / H37Rv).